Reading from the N-terminus, the 313-residue chain is Trimeric intracellular cation channel type 1B.2 (313 aa).

Over 1 to 28 (MGWVPDEWSIDHDTLIDAGGYVQKLKLY) the chain is Lumenal. Residues 29–48 (PYFDAAHYVLTCLSVRHDLG) form a helical membrane-spanning segment. Residues 49 to 57 (PDAISFSRK) lie on the Cytoplasmic side of the membrane. The discontinuously helical transmembrane segment at 58 to 82 (HPFSCWLSCMLMSFAGSFLSCFLLG) threads the bilayer. At 83 to 90 (EPIISPLK) the chain is on the lumenal side. A helical transmembrane segment spans residues 91–108 (QHADILLGSIVWYLVFYS). The Cytoplasmic segment spans residues 109 to 118 (PFDVVFRLAT). The chain crosses the membrane as a helical span at residues 119–149 (WFPVKLGLSVLKEVQRTHKIAAGVKHAVRIY). A 1,2-diacyl-sn-glycero-3-phospho-(1D-myo-inositol-4,5-bisphosphate) contacts are provided by Lys-130 and Arg-134. The Lumenal portion of the chain corresponds to 150-151 (PE). The chain crosses the membrane as a discontinuously helical span at residues 152-178 (SYLVQILVGVAKGAGSGVVKIVEQLAR). Gly-168 contributes to the a 1,2-diacyl-sn-glycero-3-phospho-(1D-myo-inositol-4,5-bisphosphate) binding site. Over 179 to 192 (GTWHPTNHEILRPS) the chain is Cytoplasmic. Residues 193–210 (FTTKACVIASIVFTLERH) form a helical membrane-spanning segment. Residues 211 to 216 (SMYVTA) are Lumenal-facing. Residues 217–239 (PHDLVYLCVVGFFIYFKLASLCL) form a helical membrane-spanning segment. Over 240–313 (SVHDVLMPIE…MSNGTDKKNN (74 aa)) the chain is Cytoplasmic.

It belongs to the TMEM38 family. Homotrimer; trimerization probably requires binding to phosphatidylinositol 4,5-bisphosphate (PIP2).

The protein resides in the endoplasmic reticulum membrane. Functionally, potassium channel that mediates transmembrane potassium transport. Might be required for maintenance of rapid intracellular calcium release. May act as a potassium counter-ion channel that functions in synchronization with calcium release from intracellular stores. Binds phosphatidylinositol 4,5-bisphosphate (PIP2). This Caenorhabditis elegans protein is Trimeric intracellular cation channel type 1B.2.